Here is a 306-residue protein sequence, read N- to C-terminus: Voltage-dependent anion channel-forming protein RSc3414 (306 aa).

Helical transmembrane passes span 28–48, 50–70, 213–233, and 239–259; these read LFLI…WLPI, VNLS…FLGF, YSVM…FGLV, and FTPV…AIAA.

This sequence belongs to the anion channel-forming bestrophin (TC 1.A.46) family.

It localises to the cell membrane. This Ralstonia nicotianae (strain ATCC BAA-1114 / GMI1000) (Ralstonia solanacearum) protein is Voltage-dependent anion channel-forming protein RSc3414.